Reading from the N-terminus, the 75-residue chain is Molt-inhibiting hormone (75 aa).

3 cysteine pairs are disulfide-bonded: C7/C44, C24/C40, and C27/C53. Position 75 is an alanine amide (A75).

Belongs to the arthropod CHH/MIH/GIH/VIH hormone family.

It is found in the secreted. Functionally, inhibits Y-organs where molting hormone (ecdysteroid) is secreted. A molting cycle is initiated when MIH secretion diminishes or stops. In Procambarus clarkii (Red swamp crayfish), this protein is Molt-inhibiting hormone.